Consider the following 145-residue polypeptide: Large ribosomal subunit protein uL13 (145 aa).

This sequence belongs to the universal ribosomal protein uL13 family. In terms of assembly, part of the 50S ribosomal subunit.

In terms of biological role, this protein is one of the early assembly proteins of the 50S ribosomal subunit, although it is not seen to bind rRNA by itself. It is important during the early stages of 50S assembly. The chain is Large ribosomal subunit protein uL13 from Halobacterium salinarum (strain ATCC 700922 / JCM 11081 / NRC-1) (Halobacterium halobium).